The chain runs to 170 residues: Lipoprotein signal peptidase (170 aa).

Transmembrane regions (helical) follow at residues 12–32 (WYWI…WVLS), 67–87 (WQRW…SVWL), and 94–113 (MWRL…GNLI). Active-site residues include aspartate 123 and aspartate 141. The chain crosses the membrane as a helical span at residues 133–153 (HFPAFNIADSAICIGAGLIIL).

It belongs to the peptidase A8 family.

It localises to the cell inner membrane. The catalysed reaction is Release of signal peptides from bacterial membrane prolipoproteins. Hydrolyzes -Xaa-Yaa-Zaa-|-(S,diacylglyceryl)Cys-, in which Xaa is hydrophobic (preferably Leu), and Yaa (Ala or Ser) and Zaa (Gly or Ala) have small, neutral side chains.. Its pathway is protein modification; lipoprotein biosynthesis (signal peptide cleavage). In terms of biological role, this protein specifically catalyzes the removal of signal peptides from prolipoproteins. This is Lipoprotein signal peptidase from Shewanella piezotolerans (strain WP3 / JCM 13877).